Reading from the N-terminus, the 223-residue chain is Ubiquinone biosynthesis protein COQ4 homolog 2, mitochondrial (223 aa).

The transit peptide at 1 to 26 (MFLRRVHPVRLGHAIQRSLTTTKSRN) directs the protein to the mitochondrion. Residues 21–32 (TTKSRNESTTTT) show a composition bias toward low complexity. A disordered region spans residues 21–43 (TTKSRNESTTTTVEAPQAVPSPP). Zn(2+) is bound by residues H177, D178, H181, and E193.

Belongs to the COQ4 family. As to quaternary structure, component of a multi-subunit COQ enzyme complex. The cofactor is Zn(2+).

The protein localises to the mitochondrion inner membrane. It carries out the reaction a 4-hydroxy-3-methoxy-5-(all-trans-polyprenyl)benzoate + H(+) = a 2-methoxy-6-(all-trans-polyprenyl)phenol + CO2. The protein operates within cofactor biosynthesis; ubiquinone biosynthesis. In terms of biological role, lyase that catalyzes the C1-decarboxylation of 4-hydroxy-3-methoxy-5-(all-trans-polyprenyl)benzoic acid into 2-methoxy-6-(all-trans-polyprenyl)phenol during ubiquinone biosynthesis. This chain is Ubiquinone biosynthesis protein COQ4 homolog 2, mitochondrial, found in Culex quinquefasciatus (Southern house mosquito).